The primary structure comprises 188 residues: Peptidyl-tRNA hydrolase (188 aa).

Residue Y14 coordinates tRNA. H19 functions as the Proton acceptor in the catalytic mechanism. Residues Y64, N66, and N112 each contribute to the tRNA site.

This sequence belongs to the PTH family. Monomer.

It is found in the cytoplasm. It carries out the reaction an N-acyl-L-alpha-aminoacyl-tRNA + H2O = an N-acyl-L-amino acid + a tRNA + H(+). Functionally, hydrolyzes ribosome-free peptidyl-tRNAs (with 1 or more amino acids incorporated), which drop off the ribosome during protein synthesis, or as a result of ribosome stalling. Catalyzes the release of premature peptidyl moieties from peptidyl-tRNA molecules trapped in stalled 50S ribosomal subunits, and thus maintains levels of free tRNAs and 50S ribosomes. This is Peptidyl-tRNA hydrolase from Leuconostoc mesenteroides subsp. mesenteroides (strain ATCC 8293 / DSM 20343 / BCRC 11652 / CCM 1803 / JCM 6124 / NCDO 523 / NBRC 100496 / NCIMB 8023 / NCTC 12954 / NRRL B-1118 / 37Y).